Here is a 209-residue protein sequence, read N- to C-terminus: Large ribosomal subunit protein uL3 (209 aa).

Positions 128–163 are disordered; sequence FGGGSRTHGQSDRLRAPGSVGGSSDPSRTFRGTRMA.

The protein belongs to the universal ribosomal protein uL3 family. Part of the 50S ribosomal subunit. Forms a cluster with proteins L14 and L19.

Its function is as follows. One of the primary rRNA binding proteins, it binds directly near the 3'-end of the 23S rRNA, where it nucleates assembly of the 50S subunit. This Chlorobium phaeobacteroides (strain DSM 266 / SMG 266 / 2430) protein is Large ribosomal subunit protein uL3.